Reading from the N-terminus, the 261-residue chain is Uridine-cytidine kinase 2 (261 aa).

Polar residues predominate over residues Met-1–Asn-16. Residues Met-1–Gly-24 form a disordered region. Ala-2 carries the N-acetylalanine modification. Position 27–35 (Gly-27–Ser-35) interacts with ATP. Residues Asp-84, Tyr-112, His-117, Arg-166, Arg-176, and Gln-184 each contribute to the substrate site. An ATP-binding site is contributed by Asp-213. Positions Arg-236–His-261 are disordered. A Phosphoserine modification is found at Ser-254.

Belongs to the uridine kinase family. As to quaternary structure, homotetramer. In terms of tissue distribution, according to PubMed:8812458; testis-specific. According to PubMed:11306702, placenta-specific.

It catalyses the reaction uridine + ATP = UMP + ADP + H(+). The enzyme catalyses cytidine + ATP = CMP + ADP + H(+). The protein operates within pyrimidine metabolism; CTP biosynthesis via salvage pathway; CTP from cytidine: step 1/3. It participates in pyrimidine metabolism; UMP biosynthesis via salvage pathway; UMP from uridine: step 1/1. In terms of biological role, phosphorylates uridine and cytidine to uridine monophosphate and cytidine monophosphate. Does not phosphorylate deoxyribonucleosides or purine ribonucleosides. Can use ATP or GTP as a phosphate donor. Can also phosphorylate cytidine and uridine nucleoside analogs such as 6-azauridine, 5-fluorouridine, 4-thiouridine, 5-bromouridine, N(4)-acetylcytidine, N(4)-benzoylcytidine, 5-fluorocytidine, 2-thiocytidine, 5-methylcytidine, and N(4)-anisoylcytidine. The sequence is that of Uridine-cytidine kinase 2 (UCK2) from Homo sapiens (Human).